Consider the following 338-residue polypeptide: Phenylalanine--tRNA ligase alpha subunit (338 aa).

Glu-253 is a Mg(2+) binding site.

The protein belongs to the class-II aminoacyl-tRNA synthetase family. Phe-tRNA synthetase alpha subunit type 1 subfamily. Tetramer of two alpha and two beta subunits. Mg(2+) is required as a cofactor.

It localises to the cytoplasm. It catalyses the reaction tRNA(Phe) + L-phenylalanine + ATP = L-phenylalanyl-tRNA(Phe) + AMP + diphosphate + H(+). The polypeptide is Phenylalanine--tRNA ligase alpha subunit (Pelobacter propionicus (strain DSM 2379 / NBRC 103807 / OttBd1)).